We begin with the raw amino-acid sequence, 449 residues long: 23S rRNA (uracil(1939)-C(5))-methyltransferase RlmD (449 aa).

The 66-residue stretch at 1–66 (MGRSRHHNKL…AKFDEAKVVE (66 aa)) folds into the TRAM domain. C79, C85, C88, and C169 together coordinate [4Fe-4S] cluster. S-adenosyl-L-methionine contacts are provided by Q280, F309, N314, E330, N357, and D379. The active-site Nucleophile is the C405.

It belongs to the class I-like SAM-binding methyltransferase superfamily. RNA M5U methyltransferase family. RlmD subfamily.

It carries out the reaction uridine(1939) in 23S rRNA + S-adenosyl-L-methionine = 5-methyluridine(1939) in 23S rRNA + S-adenosyl-L-homocysteine + H(+). Its function is as follows. Catalyzes the formation of 5-methyl-uridine at position 1939 (m5U1939) in 23S rRNA. This chain is 23S rRNA (uracil(1939)-C(5))-methyltransferase RlmD, found in Francisella tularensis subsp. novicida (strain U112).